Consider the following 391-residue polypeptide: MVTQNKKILIITGSFGNGHMQVTQSIVNQLNEMNLNHLSVIQHDLFMEAHPIMTSICKKWYINSFKYFRNTYKRFYYSRPNELDKCFYKYYGLNKLINLLIKEKPDLILLTFPTPVMSVLTEQFNINIPIATVMTDYRMHKNWITPYSQRYYVATKDTKDDFIEAGVPASYIKVTGIPIADKFEESIDKEEWLSQQHLDPSKPTILMSAGAFGVSKGFDYMINNILEKSPNSQVVMICGRSKELKRSLKAKFKDNPSVKILGYTNHMNEWMASSQLMITKPGGITISEGLSRCIPMIFLNPAPGQELENAYYFESKGFGKIADTPNEAIDIVSDLTNNEETLKVMSSKMLESKVGYSTRKICKDLLDLIGHSSQPDEIYGKVPLYARFFVK.

Belongs to the glycosyltransferase 28 family. UgtP subfamily.

The protein localises to the cell membrane. The enzyme catalyses a 1,2-diacyl-3-O-(beta-D-glucopyranosyl)-sn-glycerol + UDP-alpha-D-glucose = a 1,2-diacyl-3-O-(beta-D-Glc-(1-&gt;6)-beta-D-Glc)-sn-glycerol + UDP + H(+). The catalysed reaction is a 1,2-diacyl-sn-glycerol + UDP-alpha-D-glucose = a 1,2-diacyl-3-O-(beta-D-glucopyranosyl)-sn-glycerol + UDP + H(+). It participates in glycolipid metabolism; diglucosyl-diacylglycerol biosynthesis. Its function is as follows. Processive glucosyltransferase involved in the biosynthesis of both the bilayer- and non-bilayer-forming membrane glucolipids. Is able to successively transfer two glucosyl residues to diacylglycerol (DAG), thereby catalyzing the formation of beta-monoglucosyl-DAG (3-O-(beta-D-glucopyranosyl)-1,2-diacyl-sn-glycerol) and beta-diglucosyl-DAG (3-O-(beta-D-glucopyranosyl-beta-(1-&gt;6)-D-glucopyranosyl)-1,2-diacyl-sn-glycerol). Beta-diglucosyl-DAG is the predominant glycolipid found in Bacillales and is also used as a membrane anchor for lipoteichoic acid (LTA). This Staphylococcus epidermidis (strain ATCC 12228 / FDA PCI 1200) protein is Processive diacylglycerol beta-glucosyltransferase.